Reading from the N-terminus, the 198-residue chain is Probable chorismate pyruvate-lyase (198 aa).

Substrate is bound by residues Arg-73, Leu-111, and Glu-172.

It belongs to the UbiC family.

It localises to the cytoplasm. It carries out the reaction chorismate = 4-hydroxybenzoate + pyruvate. It participates in cofactor biosynthesis; ubiquinone biosynthesis. Functionally, removes the pyruvyl group from chorismate, with concomitant aromatization of the ring, to provide 4-hydroxybenzoate (4HB) for the ubiquinone pathway. The sequence is that of Probable chorismate pyruvate-lyase from Burkholderia lata (strain ATCC 17760 / DSM 23089 / LMG 22485 / NCIMB 9086 / R18194 / 383).